Here is an 89-residue protein sequence, read N- to C-terminus: Small ribosomal subunit protein uS15 (89 aa).

It belongs to the universal ribosomal protein uS15 family. In terms of assembly, part of the 30S ribosomal subunit. Forms a bridge to the 50S subunit in the 70S ribosome, contacting the 23S rRNA.

Functionally, one of the primary rRNA binding proteins, it binds directly to 16S rRNA where it helps nucleate assembly of the platform of the 30S subunit by binding and bridging several RNA helices of the 16S rRNA. Forms an intersubunit bridge (bridge B4) with the 23S rRNA of the 50S subunit in the ribosome. This Polynucleobacter necessarius subsp. necessarius (strain STIR1) protein is Small ribosomal subunit protein uS15.